The following is a 289-amino-acid chain: Oxaloacetate decarboxylase (289 aa).

Position 47 (Ser-47) interacts with substrate. A Mg(2+)-binding site is contributed by Asp-85. Substrate contacts are provided by Arg-156 and His-232.

The protein belongs to the isocitrate lyase/PEP mutase superfamily. Oxaloacetate decarboxylase family. As to quaternary structure, homotetramer; dimer of dimers. Requires Mg(2+) as cofactor.

It carries out the reaction oxaloacetate + H(+) = pyruvate + CO2. Catalyzes the decarboxylation of oxaloacetate into pyruvate. Seems to play a role in maintaining cellular concentrations of bicarbonate and pyruvate. The sequence is that of Oxaloacetate decarboxylase from Rhodopseudomonas palustris (strain BisB5).